A 292-amino-acid polypeptide reads, in one-letter code: MSYYNRYRNKRRSDNGGGNLSNSNNNNGGMPSGLSASDAIFDLGKNKRVTVRQFRNINLIDIREYYLDSSTGEMKPGKKGISLTEDLYDELLKHRLNIDEALRRLGSKRPKTKMVRLLSDDEYEDDNNNDSTNNDKDKNGKDKNSPKKRREDKSKASNESHDLEPRSKKKKPAPPTLLPHEENIQNAEREANATLIIPGQAGRKQQEERKQKEKEEAEEAKAKAVAEQEKEAKAKEKIAEPEPEPVPTLQAKKEDIVSNINESKDANSSDEEFAQSLEAEMNKAEDDISEEE.

2 disordered regions span residues 1 to 31 (MSYYNRYRNKRRSDNGGGNLSNSNNNNGGMP) and 117 to 292 (LLSD…SEEE). Positions 20–31 (LSNSNNNNGGMP) are enriched in low complexity. Serine 119 is modified (phosphoserine). Basic and acidic residues-rich tracts occupy residues 133 to 166 (NNDKDKNGKDKNSPKKRREDKSKASNESHDLEPR), 179 to 191 (PHEENIQNAEREA), 204 to 240 (KQQEERKQKEKEEAEEAKAKAVAEQEKEAKAKEKIAE), and 251 to 267 (AKKEDIVSNINESKDAN). A phosphoserine mark is found at serine 268, serine 269, and serine 289.

The protein belongs to the transcriptional coactivator PC4 family.

It localises to the nucleus. Its function is as follows. Plays a role in the release of TFIIB from the transcription complex during transcription initiation. Binds to TFIIB and specifically inhibits the formation of the TBP-TFIIB-promoter complexes. The protein is RNA polymerase II transcriptional coactivator SUB1 (SUB1) of Saccharomyces cerevisiae (strain ATCC 204508 / S288c) (Baker's yeast).